The sequence spans 586 residues: Ezrin (586 aa).

The region spanning proline 2–arginine 295 is the FERM domain. N6-acetyllysine is present on lysine 60. The [IL]-x-C-x-x-[DE] motif signature appears at isoleucine 115–glutamate 120. Tyrosine 146 is modified (phosphotyrosine; by PDGFR). An interaction with SCYL3 region spans residues glutamate 244–methionine 586. Residues valine 302 to glutamate 462 adopt a coiled-coil conformation. The tract at residues lysine 306–glutamate 338 is disordered. A compositionally biased stretch (basic and acidic residues) spans glutamine 308–glutamate 338. A Phosphotyrosine; by PDGFR modification is found at tyrosine 354. Serine 366 is subject to Phosphoserine. At tyrosine 478 the chain carries Phosphotyrosine. The disordered stretch occupies residues leucine 534–tyrosine 565. Phosphoserine is present on serine 535. Residues glutamine 540–tyrosine 565 show a composition bias toward basic and acidic residues. A Phosphothreonine; by ROCK2 and PKC/PRKCI modification is found at threonine 567.

Interacts with PALS1 and NHERF2. Found in a complex with EZR, PODXL and NHERF2. Interacts with MCC, PLEKHG6, PODXL, SCYL3/PACE1, NHERF1 and TMEM8B. Interacts (when phosphorylated) with FES/FPS. Interacts with dimeric S100P, the interaction may be activating through unmasking of F-actin binding sites. Identified in complexes that contain VIM, EZR, AHNAK, BFSP1, BFSP2, ANK2, PLEC, PRX and spectrin. Detected in a complex composed of at least EZR, AHNAK, PPL and PRX. Interacts with PDPN (via cytoplasmic domain); activates RHOA and promotes epithelial-mesenchymal transition. Interacts with SPN/CD43 cytoplasmic tail. Interacts with CD44 and ICAM2. Interacts with SLC9A3; interaction targets SLC9A3 to the apical membrane. Interacts with SLC9A1; regulates interactions of SLC9A1 with cytoskeletal and promotes stress fiber formation. Interacts with CLIC5; may work together in a complex which also includes RDX and MYO6 to stabilize linkages between the plasma membrane and subjacent actin cytoskeleton at the base of stereocilia. Post-translationally, phosphorylated by tyrosine-protein kinases. Phosphorylation by ROCK2 suppresses the head-to-tail association of the N-terminal and C-terminal halves resulting in an opened conformation which is capable of actin and membrane-binding. In terms of processing, S-nitrosylation is induced by interferon-gamma and oxidatively-modified low-densitity lipoprotein (LDL(ox)) possibly implicating the iNOS-S100A8/9 transnitrosylase complex. In terms of tissue distribution, detected in eye lens fiber cells. Expressed in cerebrum and cerebellum (at protein level). Component of the microvilli of intestinal epithelial cells.

It localises to the apical cell membrane. The protein localises to the cell projection. The protein resides in the microvillus membrane. It is found in the ruffle membrane. Its subcellular location is the cytoplasm. It localises to the cell cortex. The protein localises to the cytoskeleton. The protein resides in the microvillus. With respect to regulation, a head-to-tail association, of the N-terminal and C-terminal halves results in a closed conformation (inactive form) which is incapable of actin or membrane-binding. Probably involved in connections of major cytoskeletal structures to the plasma membrane. In epithelial cells, required for the formation of microvilli and membrane ruffles on the apical pole. Along with PLEKHG6, required for normal macropinocytosis. The sequence is that of Ezrin (Ezr) from Mus musculus (Mouse).